We begin with the raw amino-acid sequence, 500 residues long: Cytochrome P450 71D7 (500 aa).

A heme-binding site is contributed by Cys-441.

It belongs to the cytochrome P450 family. Heme is required as a cofactor.

The sequence is that of Cytochrome P450 71D7 (CYP71D7) from Solanum chacoense (Chaco potato).